Consider the following 122-residue polypeptide: Large ribosomal subunit protein uL14 (122 aa).

This sequence belongs to the universal ribosomal protein uL14 family. Part of the 50S ribosomal subunit. Forms a cluster with proteins L3 and L19. In the 70S ribosome, L14 and L19 interact and together make contacts with the 16S rRNA in bridges B5 and B8.

In terms of biological role, binds to 23S rRNA. Forms part of two intersubunit bridges in the 70S ribosome. This is Large ribosomal subunit protein uL14 from Colwellia psychrerythraea (strain 34H / ATCC BAA-681) (Vibrio psychroerythus).